Reading from the N-terminus, the 305-residue chain is MDKTILGSIDIETLIRHLMIIIFGLVGLTGNAIVFWLLGFHLHRNAFLVYILNLALADFFYLLCHIINSIMFLLKVPSPNIILDHCFYTIMIVLYITGLSMLSAISTERCLSVLCPIWYRCHRPEHTSTAMCAVIWVMSLLISILNGYFCNFSSPKYVNNSVCQASDIFIRTYPIFLFVLLCLSTLALLARLFSGAGKRKFTRLFVTIMLAILVFLLCGLPLGFFWFLSPWIEDRFIVLDYRLFFASVVLTVVNSCANPIIYFFVGSFRHRLKQQTLKMFLQRALQDTPETPENMVEMSRSKAEP.

Residues 1-17 (MDKTILGSIDIETLIRH) lie on the Extracellular side of the membrane. Residues 18–38 (LMIIIFGLVGLTGNAIVFWLL) form a helical membrane-spanning segment. At 39–46 (GFHLHRNA) the chain is on the cytoplasmic side. Residues 47-67 (FLVYILNLALADFFYLLCHII) traverse the membrane as a helical segment. Residues 68–85 (NSIMFLLKVPSPNIILDH) are Extracellular-facing. The helical transmembrane segment at 86 to 106 (CFYTIMIVLYITGLSMLSAIS) threads the bilayer. Residues 107-129 (TERCLSVLCPIWYRCHRPEHTST) are Cytoplasmic-facing. Residues 130–150 (AMCAVIWVMSLLISILNGYFC) form a helical membrane-spanning segment. Residues Asn-151 and Asn-159 are each glycosylated (N-linked (GlcNAc...) asparagine). At 151 to 172 (NFSSPKYVNNSVCQASDIFIRT) the chain is on the extracellular side. Residues 173-193 (YPIFLFVLLCLSTLALLARLF) form a helical membrane-spanning segment. Residues 194–207 (SGAGKRKFTRLFVT) are Cytoplasmic-facing. A helical transmembrane segment spans residues 208 to 228 (IMLAILVFLLCGLPLGFFWFL). The Extracellular segment spans residues 229-243 (SPWIEDRFIVLDYRL). Residues 244–264 (FFASVVLTVVNSCANPIIYFF) form a helical membrane-spanning segment. Topologically, residues 265 to 305 (VGSFRHRLKQQTLKMFLQRALQDTPETPENMVEMSRSKAEP) are cytoplasmic.

This sequence belongs to the G-protein coupled receptor 1 family. Mas subfamily. As to expression, expressed in a subset of sensory neurons that includes nociceptors. Expressed in the subclass of non-peptidergic sensory neurons that are IB4(+) and VR1(-).

The protein localises to the cell membrane. In terms of biological role, orphan receptor. May be a receptor for RFamide-family neuropeptides such as NPFF and NPAF, which are analgesic in vivo. May regulate nociceptor function and/or development, including the sensation or modulation of pain. The chain is Mas-related G-protein coupled receptor member A8 (Mrgpra8) from Mus musculus (Mouse).